A 203-amino-acid polypeptide reads, in one-letter code: MSRYTGPSWKQSRRLGLSLTGTGKELARRNYVPGQHGPNNRSKLSEYGLQLAEKQKLRFSYGLGEKQFRNLVVQATKIKEGTLGFNFMVLLERRLDNVVYRLGLATTRRQARQFVNHGHILVDGKRVDIPSYRVDPGQVISVREKSMKVPAILEAVEATLGRPAFVSFDAEKLKGSLTRLPERDEINPEINEALVVEFYNKML.

Residues 93 to 156 form the S4 RNA-binding domain; it reads RRLDNVVYRL…MKVPAILEAV (64 aa).

The protein belongs to the universal ribosomal protein uS4 family. In terms of assembly, part of the 30S ribosomal subunit. Contacts protein S5. The interaction surface between S4 and S5 is involved in control of translational fidelity.

Functionally, one of the primary rRNA binding proteins, it binds directly to 16S rRNA where it nucleates assembly of the body of the 30S subunit. With S5 and S12 plays an important role in translational accuracy. The chain is Small ribosomal subunit protein uS4 from Streptococcus pyogenes serotype M49 (strain NZ131).